We begin with the raw amino-acid sequence, 449 residues long: UDP-N-acetylmuramoylalanine--D-glutamate ligase (449 aa).

118–124 serves as a coordination point for ATP; the sequence is GTNGKTT.

Belongs to the MurCDEF family.

It localises to the cytoplasm. It carries out the reaction UDP-N-acetyl-alpha-D-muramoyl-L-alanine + D-glutamate + ATP = UDP-N-acetyl-alpha-D-muramoyl-L-alanyl-D-glutamate + ADP + phosphate + H(+). Its pathway is cell wall biogenesis; peptidoglycan biosynthesis. Its function is as follows. Cell wall formation. Catalyzes the addition of glutamate to the nucleotide precursor UDP-N-acetylmuramoyl-L-alanine (UMA). The polypeptide is UDP-N-acetylmuramoylalanine--D-glutamate ligase (Staphylococcus epidermidis (strain ATCC 35984 / DSM 28319 / BCRC 17069 / CCUG 31568 / BM 3577 / RP62A)).